The chain runs to 382 residues: Ribonuclease D (382 aa).

One can recognise a 3'-5' exonuclease domain in the interval 4–169 (ITTTAELASV…DVFAALDADL (166 aa)). Positions 208–289 (KPKDLAVMME…QRGLARDPRE (82 aa)) constitute an HRDC domain.

Belongs to the RNase D family. The cofactor is a divalent metal cation.

It is found in the cytoplasm. It catalyses the reaction Exonucleolytic cleavage that removes extra residues from the 3'-terminus of tRNA to produce 5'-mononucleotides.. In terms of biological role, exonuclease involved in the 3' processing of various precursor tRNAs. Initiates hydrolysis at the 3'-terminus of an RNA molecule and releases 5'-mononucleotides. This Nitrobacter hamburgensis (strain DSM 10229 / NCIMB 13809 / X14) protein is Ribonuclease D.